Reading from the N-terminus, the 361-residue chain is Glutamate 5-kinase (361 aa).

Position 7 (K7) interacts with ATP. Substrate contacts are provided by S47, D134, and N146. ATP contacts are provided by residues 166 to 167 (TD) and 209 to 215 (TGGMTTK). One can recognise a PUA domain in the interval 274–345 (LGTLQLDEGA…EAIETQMSTN (72 aa)).

Belongs to the glutamate 5-kinase family.

The protein resides in the cytoplasm. The catalysed reaction is L-glutamate + ATP = L-glutamyl 5-phosphate + ADP. It participates in amino-acid biosynthesis; L-proline biosynthesis; L-glutamate 5-semialdehyde from L-glutamate: step 1/2. Catalyzes the transfer of a phosphate group to glutamate to form L-glutamate 5-phosphate. The chain is Glutamate 5-kinase from Prochlorococcus marinus (strain MIT 9313).